A 285-amino-acid chain; its full sequence is Eukaryotic translation initiation factor 3 subunit F-2 (285 aa).

The region spanning 11-145 (VFLKPLVLFQ…TRLYCAVEMG (135 aa)) is the MPN domain.

It belongs to the eIF-3 subunit F family. In terms of assembly, component of the eukaryotic translation initiation factor 3 (eIF-3) complex. The eIF-3 complex interacts with pix.

It localises to the cytoplasm. In terms of biological role, component of the eukaryotic translation initiation factor 3 (eIF-3) complex, which is involved in protein synthesis of a specialized repertoire of mRNAs and, together with other initiation factors, stimulates binding of mRNA and methionyl-tRNAi to the 40S ribosome. The eIF-3 complex specifically targets and initiates translation of a subset of mRNAs involved in cell proliferation. In Drosophila sechellia (Fruit fly), this protein is Eukaryotic translation initiation factor 3 subunit F-2.